Reading from the N-terminus, the 108-residue chain is UPF0060 membrane protein SAB2216c (108 aa).

Transmembrane regions (helical) follow at residues 5 to 25 (IFIF…IWLW), 31 to 51 (CSLV…IATF), 60 to 80 (VYAA…MVVD), and 86 to 106 (KYDV…LLPS).

This sequence belongs to the UPF0060 family.

It localises to the cell membrane. This chain is UPF0060 membrane protein SAB2216c, found in Staphylococcus aureus (strain bovine RF122 / ET3-1).